A 157-amino-acid chain; its full sequence is SsrA-binding protein (157 aa).

The interval 133 to 157 (HDKRNSIKEREGKREVERALKSRSR) is disordered.

The protein belongs to the SmpB family.

It localises to the cytoplasm. Required for rescue of stalled ribosomes mediated by trans-translation. Binds to transfer-messenger RNA (tmRNA), required for stable association of tmRNA with ribosomes. tmRNA and SmpB together mimic tRNA shape, replacing the anticodon stem-loop with SmpB. tmRNA is encoded by the ssrA gene; the 2 termini fold to resemble tRNA(Ala) and it encodes a 'tag peptide', a short internal open reading frame. During trans-translation Ala-aminoacylated tmRNA acts like a tRNA, entering the A-site of stalled ribosomes, displacing the stalled mRNA. The ribosome then switches to translate the ORF on the tmRNA; the nascent peptide is terminated with the 'tag peptide' encoded by the tmRNA and targeted for degradation. The ribosome is freed to recommence translation, which seems to be the essential function of trans-translation. The sequence is that of SsrA-binding protein from Verminephrobacter eiseniae (strain EF01-2).